The chain runs to 234 residues: Uridylate kinase (234 aa).

ATP is bound by residues 8–11 (KLSG), Gly-51, and Arg-55. UMP contacts are provided by residues Asp-68 and 129 to 136 (TSNPFFTT). ATP is bound by residues Thr-156, Tyr-162, and Asp-165.

Belongs to the UMP kinase family. Homohexamer.

Its subcellular location is the cytoplasm. It carries out the reaction UMP + ATP = UDP + ADP. Its pathway is pyrimidine metabolism; CTP biosynthesis via de novo pathway; UDP from UMP (UMPK route): step 1/1. Inhibited by UTP. Functionally, catalyzes the reversible phosphorylation of UMP to UDP. The sequence is that of Uridylate kinase from Fervidobacterium nodosum (strain ATCC 35602 / DSM 5306 / Rt17-B1).